We begin with the raw amino-acid sequence, 567 residues long: Galectin-3-binding protein A (567 aa).

Positions 1 to 16 are cleaved as a signal peptide; that stretch reads MIMYIIWALLFIPVSA. Residues 34-133 form the SRCR domain; it reads VRLVGGLPSS…HQEDAGVVCD (100 aa). Disulfide bonds link C58–C122, C71–C132, and C102–C112. 4 N-linked (GlcNAc...) asparagine glycosylation sites follow: N137, N197, N200, and N204. One can recognise a BACK domain in the interval 272-374; the sequence is PVSMYEYGLR…IPVDKLYDIQ (103 aa). 3 N-linked (GlcNAc...) asparagine glycosylation sites follow: N412, N432, and N543.

The protein localises to the secreted. The protein resides in the extracellular space. It localises to the extracellular matrix. Its function is as follows. Promotes integrin-mediated cell adhesion. The protein is Galectin-3-binding protein A (lgals3bpa) of Danio rerio (Zebrafish).